Here is a 260-residue protein sequence, read N- to C-terminus: 3-methyl-2-oxobutanoate hydroxymethyltransferase (260 aa).

2 residues coordinate Mg(2+): D44 and D83. 3-methyl-2-oxobutanoate is bound by residues 44 to 45, D83, and K113; that span reads DS. E115 contacts Mg(2+). E183 serves as the catalytic Proton acceptor.

It belongs to the PanB family. Homodecamer; pentamer of dimers. It depends on Mg(2+) as a cofactor.

It localises to the cytoplasm. It carries out the reaction 3-methyl-2-oxobutanoate + (6R)-5,10-methylene-5,6,7,8-tetrahydrofolate + H2O = 2-dehydropantoate + (6S)-5,6,7,8-tetrahydrofolate. The protein operates within cofactor biosynthesis; (R)-pantothenate biosynthesis; (R)-pantoate from 3-methyl-2-oxobutanoate: step 1/2. In terms of biological role, catalyzes the reversible reaction in which hydroxymethyl group from 5,10-methylenetetrahydrofolate is transferred onto alpha-ketoisovalerate to form ketopantoate. The sequence is that of 3-methyl-2-oxobutanoate hydroxymethyltransferase from Gloeobacter violaceus (strain ATCC 29082 / PCC 7421).